Reading from the N-terminus, the 395-residue chain is S-adenosylmethionine synthase (395 aa).

An ATP-binding site is contributed by histidine 16. Residue aspartate 18 participates in Mg(2+) binding. A K(+)-binding site is contributed by glutamate 44. Glutamate 57 and glutamine 100 together coordinate L-methionine. Positions 100–110 (QSPDIAQGVDD) are flexible loop. Residues 174–176 (DAK), 241–242 (RF), aspartate 250, 256–257 (RK), alanine 273, and lysine 277 each bind ATP. Aspartate 250 contributes to the L-methionine binding site. Lysine 281 is an L-methionine binding site.

The protein belongs to the AdoMet synthase family. Homotetramer; dimer of dimers. It depends on Mg(2+) as a cofactor. Requires K(+) as cofactor.

It localises to the cytoplasm. The enzyme catalyses L-methionine + ATP + H2O = S-adenosyl-L-methionine + phosphate + diphosphate. It participates in amino-acid biosynthesis; S-adenosyl-L-methionine biosynthesis; S-adenosyl-L-methionine from L-methionine: step 1/1. Its function is as follows. Catalyzes the formation of S-adenosylmethionine (AdoMet) from methionine and ATP. The overall synthetic reaction is composed of two sequential steps, AdoMet formation and the subsequent tripolyphosphate hydrolysis which occurs prior to release of AdoMet from the enzyme. This is S-adenosylmethionine synthase from Levilactobacillus brevis (strain ATCC 367 / BCRC 12310 / CIP 105137 / JCM 1170 / LMG 11437 / NCIMB 947 / NCTC 947) (Lactobacillus brevis).